We begin with the raw amino-acid sequence, 79 residues long: ATP synthase subunit c (79 aa).

2 helical membrane passes run 11 to 31 and 53 to 73; these read IAAAIMMGLSAIGAAVGIGIL and FFIVMGLVDAIPMITVGLSLY.

It belongs to the ATPase C chain family. As to quaternary structure, F-type ATPases have 2 components, F(1) - the catalytic core - and F(0) - the membrane proton channel. F(1) has five subunits: alpha(3), beta(3), gamma(1), delta(1), epsilon(1). F(0) has three main subunits: a(1), b(2) and c(10-14). The alpha and beta chains form an alternating ring which encloses part of the gamma chain. F(1) is attached to F(0) by a central stalk formed by the gamma and epsilon chains, while a peripheral stalk is formed by the delta and b chains.

It localises to the cell inner membrane. Its function is as follows. F(1)F(0) ATP synthase produces ATP from ADP in the presence of a proton or sodium gradient. F-type ATPases consist of two structural domains, F(1) containing the extramembraneous catalytic core and F(0) containing the membrane proton channel, linked together by a central stalk and a peripheral stalk. During catalysis, ATP synthesis in the catalytic domain of F(1) is coupled via a rotary mechanism of the central stalk subunits to proton translocation. Key component of the F(0) channel; it plays a direct role in translocation across the membrane. A homomeric c-ring of between 10-14 subunits forms the central stalk rotor element with the F(1) delta and epsilon subunits. The polypeptide is ATP synthase subunit c (Blochmanniella floridana).